A 174-amino-acid chain; its full sequence is Shikimate kinase 2 (174 aa).

Position 12–17 (12–17) interacts with ATP; it reads GCGKTT. Mg(2+)-binding residues include threonine 16 and aspartate 32. Positions 34, 58, and 79 each coordinate substrate. The tract at residues 112–126 is LID domain; that stretch reads QAAPEEDLRPTLTGK. Residue arginine 120 coordinates ATP. A substrate-binding site is contributed by arginine 139.

The protein belongs to the shikimate kinase family. AroL subfamily. In terms of assembly, monomer. Requires Mg(2+) as cofactor.

It is found in the cytoplasm. It carries out the reaction shikimate + ATP = 3-phosphoshikimate + ADP + H(+). It participates in metabolic intermediate biosynthesis; chorismate biosynthesis; chorismate from D-erythrose 4-phosphate and phosphoenolpyruvate: step 5/7. Its function is as follows. Catalyzes the specific phosphorylation of the 3-hydroxyl group of shikimic acid using ATP as a cosubstrate. The sequence is that of Shikimate kinase 2 from Escherichia coli O7:K1 (strain IAI39 / ExPEC).